The primary structure comprises 425 residues: Trigger factor (425 aa).

A PPIase FKBP-type domain is found at 158–231; sequence GDLVRVNMEV…VEEVYKRTLP (74 aa).

The protein belongs to the FKBP-type PPIase family. Tig subfamily.

It localises to the cytoplasm. It carries out the reaction [protein]-peptidylproline (omega=180) = [protein]-peptidylproline (omega=0). Functionally, involved in protein export. Acts as a chaperone by maintaining the newly synthesized protein in an open conformation. Functions as a peptidyl-prolyl cis-trans isomerase. The protein is Trigger factor (tig) of Thermotoga maritima (strain ATCC 43589 / DSM 3109 / JCM 10099 / NBRC 100826 / MSB8).